A 122-amino-acid polypeptide reads, in one-letter code: Selenoprotein H (122 aa).

Position 20 is an N6-acetyllysine (K20). A cross-link (cysteinyl-selenocysteine (Cys-Sec); redox-active) is located at residues 41–44; it reads CTSU. U44 is a non-standard amino acid (selenocysteine).

The protein belongs to the SelWTH family.

May be involved in a redox-related process. This chain is Selenoprotein H, found in Macaca fascicularis (Crab-eating macaque).